The primary structure comprises 289 residues: Protein shisa-2 homolog (289 aa).

Residues 1-27 form the signal peptide; the sequence is MWAGCHPDAASLLRLLLAALLAAGALA. The Extracellular segment spans residues 28–104; that stretch reads SGEYCHGWLD…RADKDGPDGS (77 aa). The segment at 81–102 is disordered; that stretch reads GCDNDRQQGAGEPGRADKDGPD. The chain crosses the membrane as a helical span at residues 105-125; sequence AVPIYVPFLIVGSVFVAFIVL. Over 126 to 289 the chain is Cytoplasmic; the sequence is GSLVAACCCR…EQKMYPAVTV (164 aa). Residues 162–198 are disordered; sequence PSASTSRGSSSRQSSTAASSSSSANSGARAPPTRSQT. The segment covering 163 to 191 has biased composition (low complexity); that stretch reads SASTSRGSSSRQSSTAASSSSSANSGARA.

It belongs to the shisa family.

Its subcellular location is the endoplasmic reticulum membrane. Functionally, plays an essential role in the maturation of presomitic mesoderm cells by individual attenuation of both FGF and WNT signaling. This chain is Protein shisa-2 homolog (SHISA2), found in Bos taurus (Bovine).